Consider the following 76-residue polypeptide: Exodeoxyribonuclease 7 small subunit (76 aa).

It belongs to the XseB family. As to quaternary structure, heterooligomer composed of large and small subunits.

The protein resides in the cytoplasm. It catalyses the reaction Exonucleolytic cleavage in either 5'- to 3'- or 3'- to 5'-direction to yield nucleoside 5'-phosphates.. Bidirectionally degrades single-stranded DNA into large acid-insoluble oligonucleotides, which are then degraded further into small acid-soluble oligonucleotides. The chain is Exodeoxyribonuclease 7 small subunit from Staphylococcus aureus (strain Mu3 / ATCC 700698).